A 465-amino-acid chain; its full sequence is Gamma-aminobutyric acid receptor subunit gamma-1 (465 aa).

A signal peptide spans 1-20 (MGSGKVFLFSPSLLWSQTRG). The Extracellular portion of the chain corresponds to 21 to 273 (VRLIFLLLTL…FDLSRRMGYF (253 aa)). N-linked (GlcNAc...) asparagine glycosylation is found at asparagine 50 and asparagine 127. A disulfide bridge connects residues cysteine 188 and cysteine 202. Asparagine 245 carries an N-linked (GlcNAc...) asparagine glycan. The chain crosses the membrane as a helical span at residues 274 to 294 (TIQTYIPCILTVVLSWVSFWI). Over 295–300 (NKDAVP) the chain is Cytoplasmic. A helical membrane pass occupies residues 301 to 320 (ARTSLGITTVLTMTTLSTIA). Residues 321–328 (RKSLPKVS) are Extracellular-facing. A helical transmembrane segment spans residues 329-349 (YVTAMDLFVSVCFIFVFAALM). The Cytoplasmic segment spans residues 350 to 444 (EYGTLHYFTS…RIAKIDSYSR (95 aa)). Residues 445 to 465 (IFFPTAFALFNLVYWVGYLYL) traverse the membrane as a helical segment.

This sequence belongs to the ligand-gated ion channel (TC 1.A.9) family. Gamma-aminobutyric acid receptor (TC 1.A.9.5) subfamily. GABRG1 sub-subfamily. As to quaternary structure, heteropentamer, formed by a combination of alpha (GABRA1-6), beta (GABRB1-3), gamma (GABRG1-3), delta (GABRD), epsilon (GABRE), rho (GABRR1-3), pi (GABRP) and theta (GABRQ) chains, each subunit exhibiting distinct physiological and pharmacological properties. May be palmitoylated. As to expression, expressed in brain.

Its subcellular location is the postsynaptic cell membrane. The protein resides in the cell membrane. It catalyses the reaction chloride(in) = chloride(out). Its function is as follows. Gamma subunit of the heteropentameric ligand-gated chloride channel gated by gamma-aminobutyric acid (GABA), a major inhibitory neurotransmitter in the brain. GABA-gated chloride channels, also named GABA(A) receptors (GABAAR), consist of five subunits arranged around a central pore and contain GABA active binding site(s) located at the alpha and beta subunit interface(s). When activated by GABA, GABAARs selectively allow the flow of chloride anions across the cell membrane down their electrochemical gradient. Chloride influx into the postsynaptic neuron following GABAAR opening decreases the neuron ability to generate a new action potential, thereby reducing nerve transmission. The protein is Gamma-aminobutyric acid receptor subunit gamma-1 of Rattus norvegicus (Rat).